Reading from the N-terminus, the 288-residue chain is ATP synthase gamma chain (288 aa).

It belongs to the ATPase gamma chain family. As to quaternary structure, F-type ATPases have 2 components, CF(1) - the catalytic core - and CF(0) - the membrane proton channel. CF(1) has five subunits: alpha(3), beta(3), gamma(1), delta(1), epsilon(1). CF(0) has three main subunits: a, b and c.

The protein resides in the cell inner membrane. Produces ATP from ADP in the presence of a proton gradient across the membrane. The gamma chain is believed to be important in regulating ATPase activity and the flow of protons through the CF(0) complex. In Rickettsia bellii (strain RML369-C), this protein is ATP synthase gamma chain.